Reading from the N-terminus, the 597-residue chain is Elongation factor 4 (597 aa).

Residues 2-184 (KNIRNFSIIA…TMIAKIPPPV (183 aa)) enclose the tr-type G domain. GTP-binding positions include 14–19 (DHGKST) and 131–134 (NKID).

This sequence belongs to the TRAFAC class translation factor GTPase superfamily. Classic translation factor GTPase family. LepA subfamily.

Its subcellular location is the cell inner membrane. The enzyme catalyses GTP + H2O = GDP + phosphate + H(+). Functionally, required for accurate and efficient protein synthesis under certain stress conditions. May act as a fidelity factor of the translation reaction, by catalyzing a one-codon backward translocation of tRNAs on improperly translocated ribosomes. Back-translocation proceeds from a post-translocation (POST) complex to a pre-translocation (PRE) complex, thus giving elongation factor G a second chance to translocate the tRNAs correctly. Binds to ribosomes in a GTP-dependent manner. This is Elongation factor 4 from Methylobacillus flagellatus (strain ATCC 51484 / DSM 6875 / VKM B-1610 / KT).